The primary structure comprises 252 residues: Eukaryotic translation initiation factor 3 subunit J (252 aa).

Disordered regions lie at residues 24–107 (VPAG…TPEE) and 209–232 (KQSK…TMKD). Residues 36 to 56 (EDEEDDVKDNWDDEEEEEEVK) show a composition bias toward acidic residues. Over residues 57–107 (EAEVKQEPKVSEKKKIAEKIKEKEKQQKKKQEELKKRLEAPEEHKELTPEE) the composition is skewed to basic and acidic residues. A coiled-coil region spans residues 65 to 130 (KVSEKKKIAE…ESDLELAKET (66 aa)).

This sequence belongs to the eIF-3 subunit J family. In terms of assembly, component of the eukaryotic translation initiation factor 3 (eIF-3) complex, which is composed of 13 subunits: EIF3A, EIF3B, EIF3C, EIF3D, EIF3E, EIF3F, EIF3G, EIF3H, EIF3I, EIF3J, EIF3K, EIF3L and EIF3M.

It localises to the cytoplasm. Component of the eukaryotic translation initiation factor 3 (eIF-3) complex, which is involved in protein synthesis of a specialized repertoire of mRNAs and, together with other initiation factors, stimulates binding of mRNA and methionyl-tRNAi to the 40S ribosome. The eIF-3 complex specifically targets and initiates translation of a subset of mRNAs involved in cell proliferation. This is Eukaryotic translation initiation factor 3 subunit J from Gallus gallus (Chicken).